Reading from the N-terminus, the 564-residue chain is Potassium-transporting ATPase potassium-binding subunit (564 aa).

10 helical membrane passes run 4 to 24 (HEIL…PFLG), 67 to 87 (TLAL…ILML), 135 to 155 (VGLT…LVAL), 179 to 199 (LYVL…QGVP), 258 to 278 (FEVA…GHYV), 286 to 306 (AILG…LWAE), 376 to 396 (IFGG…IAVF), 420 to 440 (LLVF…AIAA), 487 to 507 (LMIG…ILAI), and 528 to 548 (GPLF…LTFL).

Belongs to the KdpA family. In terms of assembly, the system is composed of three essential subunits: KdpA, KdpB and KdpC.

It is found in the cell inner membrane. Functionally, part of the high-affinity ATP-driven potassium transport (or Kdp) system, which catalyzes the hydrolysis of ATP coupled with the electrogenic transport of potassium into the cytoplasm. This subunit binds the periplasmic potassium ions and delivers the ions to the membrane domain of KdpB through an intramembrane tunnel. This is Potassium-transporting ATPase potassium-binding subunit from Pseudomonas aeruginosa (strain ATCC 15692 / DSM 22644 / CIP 104116 / JCM 14847 / LMG 12228 / 1C / PRS 101 / PAO1).